A 179-amino-acid chain; its full sequence is Large ribosomal subunit protein uL5 (179 aa).

Belongs to the universal ribosomal protein uL5 family. Part of the 50S ribosomal subunit; part of the 5S rRNA/L5/L18/L25 subcomplex. Contacts the 5S rRNA and the P site tRNA. Forms a bridge to the 30S subunit in the 70S ribosome.

In terms of biological role, this is one of the proteins that bind and probably mediate the attachment of the 5S RNA into the large ribosomal subunit, where it forms part of the central protuberance. In the 70S ribosome it contacts protein S13 of the 30S subunit (bridge B1b), connecting the 2 subunits; this bridge is implicated in subunit movement. Contacts the P site tRNA; the 5S rRNA and some of its associated proteins might help stabilize positioning of ribosome-bound tRNAs. This Bacillus anthracis (strain A0248) protein is Large ribosomal subunit protein uL5.